A 377-amino-acid polypeptide reads, in one-letter code: Leukocyte elastase inhibitor (377 aa).

N-acetylmethionine is present on M1.

It belongs to the serpin family. Ov-serpin subfamily.

It is found in the cytoplasm. Its function is as follows. Regulates the activity of the neutrophil proteases. This Xenopus laevis (African clawed frog) protein is Leukocyte elastase inhibitor (serpinb1).